The following is a 119-amino-acid chain: Large ribosomal subunit protein bL20 (119 aa).

This sequence belongs to the bacterial ribosomal protein bL20 family.

In terms of biological role, binds directly to 23S ribosomal RNA and is necessary for the in vitro assembly process of the 50S ribosomal subunit. It is not involved in the protein synthesizing functions of that subunit. This chain is Large ribosomal subunit protein bL20, found in Shouchella clausii (strain KSM-K16) (Alkalihalobacillus clausii).